A 567-amino-acid chain; its full sequence is Beta-galactoside-specific lectin 2 (567 aa).

The N-terminal stretch at 1-33 is a signal peptide; the sequence is MNARLASSRAWVWCFLMVGLVCGATAKAESKIN. N-linked (GlcNAc...) asparagine glycosylation is present at Asn-145. Residue Glu-198 is part of the active site. 2 cysteine pairs are disulfide-bonded: Cys-280/Cys-306 and Cys-322/Cys-341. Residues 288 to 301 constitute a propeptide, connecting peptide; that stretch reads DVHNWPLVIRPVMV. Residues 309-439 enclose the Ricin B-type lectin 1 domain; the sequence is SEPTVRIVGR…DSLGQSWLAS (131 aa). 324–326 serves as a coordination point for D-galactose; it reads DVR. Asn-362 carries N-linked (GlcNAc...) asparagine glycosylation. A disulfide bond links Cys-365 and Cys-382. The N-linked (GlcNAc...) asparagine glycan is linked to Asn-440. One can recognise a Ricin B-type lectin 2 domain in the interval 443-566; that stretch reads APREVTIYGF…GNPNQMWLPV (124 aa). 2 disulfide bridges follow: Cys-456–Cys-469 and Cys-495–Cys-512. Residue 539-541 coordinates D-galactose; the sequence is DVR.

It belongs to the ribosome-inactivating protein family. Type 2 RIP subfamily. As to quaternary structure, disulfide-linked dimer of A and B chains.

The enzyme catalyses Endohydrolysis of the N-glycosidic bond at one specific adenosine on the 28S rRNA.. Its function is as follows. The A chain is responsible for inhibiting protein synthesis through the catalytic inactivation of 60S ribosomal subunits by removing adenine from position 4,324 of 28S rRNA. The B chain binds to cell receptors and probably facilitates the entry into the cell of the A chain; B chains are also responsible for cell agglutination (lectin activity). The polypeptide is Beta-galactoside-specific lectin 2 (Viscum album (European mistletoe)).